Here is an 86-residue protein sequence, read N- to C-terminus: Probable weak neurotoxin NNAM2I (86 aa).

The signal sequence occupies residues 1 to 21 (MKTLPLTLVVVTIVCLDLGYT). Cystine bridges form between cysteine 24–cysteine 45, cysteine 27–cysteine 32, cysteine 38–cysteine 63, cysteine 67–cysteine 78, and cysteine 79–cysteine 84.

Belongs to the three-finger toxin family. Ancestral subfamily. Orphan group II sub-subfamily. As to expression, expressed by the venom gland.

The protein localises to the secreted. Functionally, binds with low affinity to muscular (alpha-1-beta-1-delta-epsilon/CHRNA1-CHRNB1-CHRND-CHRNE) and very low affinity to neuronal (alpha-7/CHRNA7) nicotinic acetylcholine receptor (nAChR). The chain is Probable weak neurotoxin NNAM2I from Naja atra (Chinese cobra).